A 100-amino-acid chain; its full sequence is Small ribosomal subunit protein uS14 (100 aa).

This sequence belongs to the universal ribosomal protein uS14 family. In terms of assembly, part of the 30S ribosomal subunit. Contacts proteins S3 and S10.

In terms of biological role, binds 16S rRNA, required for the assembly of 30S particles and may also be responsible for determining the conformation of the 16S rRNA at the A site. The chain is Small ribosomal subunit protein uS14 from Prochlorococcus marinus (strain AS9601).